A 514-amino-acid polypeptide reads, in one-letter code: Nucleus accumbens-associated protein 1 (514 aa).

The BTB domain occupies 30–94 (CDVSVVVKGH…CYTGRLSMNM (65 aa)). K167 is covalently cross-linked (Glycyl lysine isopeptide (Lys-Gly) (interchain with G-Cter in SUMO1); alternate). A Glycyl lysine isopeptide (Lys-Gly) (interchain with G-Cter in SUMO2); alternate cross-link involves residue K167. K182 is covalently cross-linked (Glycyl lysine isopeptide (Lys-Gly) (interchain with G-Cter in SUMO2)). 2 disordered regions span residues 183-205 (RLWD…RKMA) and 242-279 (PSMS…EEGT). S187 carries the post-translational modification Phosphoserine. Residues 242 to 251 (PSMSERTSPG) are compositionally biased toward polar residues. S245 carries the post-translational modification Phosphoserine; by PKC. The segment covering 252-264 (TSSAYTSDSPSSY) has biased composition (low complexity). Acidic residues predominate over residues 267-279 (EEDEEEDAGEEGT). Residues K304, K438, K466, and K485 each participate in a glycyl lysine isopeptide (Lys-Gly) (interchain with G-Cter in SUMO2) cross-link. Positions 360–457 (GTNVYITRAQ…DMCTNARRVV (98 aa)) constitute a BEN domain. Phosphoserine occurs at positions 492 and 496.

Homooligomer; mediated by the BTB domain. Interacts with HDAC3 and HDAC4. Interacts (via BTB domain) with CUL3, PSMD7 and RCOR1. As to expression, ubiquitously expressed with higher expression in the brain, kidney and liver, and at lower levels in heart, lung and testes.

Its subcellular location is the nucleus. The protein resides in the cytoplasm. In terms of biological role, functions as a transcriptional repressor. Seems to function as a transcriptional corepressor in neuronal cells through recruitment of HDAC3 and HDAC4. Contributes to tumor progression, and tumor cell proliferation and survival. This may be mediated at least in part through repressing transcriptional activity of GADD45GIP1. Required for recruiting the proteasome from the nucleus to the cytoplasm and dendritic spines. Involved in the acute behavioral and neurological responses to cocaine and amphetamines. The polypeptide is Nucleus accumbens-associated protein 1 (Nacc1) (Mus musculus (Mouse)).